The chain runs to 312 residues: Ribosomal protein L11 methyltransferase (312 aa).

S-adenosyl-L-methionine contacts are provided by Thr-163, Gly-184, Asp-206, and Asn-248.

It belongs to the methyltransferase superfamily. PrmA family.

It is found in the cytoplasm. The catalysed reaction is L-lysyl-[protein] + 3 S-adenosyl-L-methionine = N(6),N(6),N(6)-trimethyl-L-lysyl-[protein] + 3 S-adenosyl-L-homocysteine + 3 H(+). Functionally, methylates ribosomal protein L11. In Clostridium kluyveri (strain NBRC 12016), this protein is Ribosomal protein L11 methyltransferase.